Here is a 33-residue protein sequence, read N- to C-terminus: Photosystem II reaction center protein Psb30 (33 aa).

Residues 5-25 traverse the membrane as a helical segment; the sequence is VIAQPIVLGLIVASGPLVIVS.

The protein belongs to the Psb30/Ycf12 family. In terms of assembly, PSII is composed of 1 copy each of membrane proteins PsbA, PsbB, PsbC, PsbD, PsbE, PsbF, PsbH, PsbI, PsbJ, PsbK, PsbL, PsbM, PsbT, PsbX, PsbY, PsbZ, Psb30/Ycf12, peripheral proteins of the oxygen-evolving complex and a large number of cofactors. It forms dimeric complexes.

It is found in the plastid membrane. Its function is as follows. A core subunit of photosystem II (PSII), probably helps stabilize the reaction center. The polypeptide is Photosystem II reaction center protein Psb30 (Aneura mirabilis (Parasitic liverwort)).